A 347-amino-acid chain; its full sequence is MLNSHSITIAIDAMGGDYGPSVVVPGAVKAAQITGAKIILVGNTPEIEDQLALLQVKNTKIEIVHASDVANMDEKPSDILRRKKNSSIQIACRLVKEGLANGIVSAGHSGASVACGMFIIGRITGVERPALASILPTEKNPLILLDVGATVDCKPYHLFQFGLMGHTFACDLLNIQSPRVGILSIGEEEGKGNTQVKEAYELLKMAKDINFTGNVEGRDLFTGNVDVTICDGFVGNVALKLSEGLSSSLSRVLRKELFSSGIFSKIGTFLAKNAFKNFSKLIDYAEYGGAPLLGLKGIFIVSHGSSNEKAICNATKMAVLFEQKETNKRLIDSIGLNEELTRFGHSC.

The protein belongs to the PlsX family. In terms of assembly, homodimer. Probably interacts with PlsY.

It localises to the cytoplasm. The catalysed reaction is a fatty acyl-[ACP] + phosphate = an acyl phosphate + holo-[ACP]. The protein operates within lipid metabolism; phospholipid metabolism. Catalyzes the reversible formation of acyl-phosphate (acyl-PO(4)) from acyl-[acyl-carrier-protein] (acyl-ACP). This enzyme utilizes acyl-ACP as fatty acyl donor, but not acyl-CoA. The chain is Phosphate acyltransferase from Lawsonia intracellularis (strain PHE/MN1-00).